The sequence spans 206 residues: MKILLTGFEPFGGDDKNPTMDIVEALSERIPEVVGEILPVSFKRAREKLLKVLDDVRPDITINLGLAPGRTHISVERVAVNMIDARIPDNDGEQPKDEPIVEGGPAAYFATIPTREIVEEMKKNGIPAVLSYTAGTYLCNFAMYLTLHTSATKGYPKIAGFIHVPYTPDQVLEKKNTPSMSLDLEIKGVEIAIRVAQSALHSSQLR.

Residues E76, C139, and H163 contribute to the active site.

It belongs to the peptidase C15 family. In terms of assembly, homotetramer.

The protein localises to the cytoplasm. It catalyses the reaction Release of an N-terminal pyroglutamyl group from a polypeptide, the second amino acid generally not being Pro.. Removes 5-oxoproline from various penultimate amino acid residues except L-proline. The protein is Pyrrolidone-carboxylate peptidase (pcp) of Pyrococcus horikoshii (strain ATCC 700860 / DSM 12428 / JCM 9974 / NBRC 100139 / OT-3).